A 477-amino-acid chain; its full sequence is Nuclear receptor subfamily 6 group A member 1-A (477 aa).

The segment at residues 40-115 is a DNA-binding region (nuclear receptor); sequence QRSCLICGDR…MGMNRKAIRE (76 aa). NR C4-type zinc fingers lie at residues 43–63 and 79–98; these read CLIC…CEGC and CSRD…CQYC. Residues 147–187 form a disordered region; that stretch reads DEANMPEHTWGNNGDSDHSSPGNGVSDGNQPSPVSTLSSNR. Residues 156–187 show a composition bias toward polar residues; that stretch reads WGNNGDSDHSSPGNGVSDGNQPSPVSTLSSNR. An NR LBD domain is found at 230-461; that stretch reads QSHTLIGQLV…HSCKSSLSSY (232 aa).

It belongs to the nuclear hormone receptor family. NR6 subfamily. In terms of assembly, homodimer. As to expression, expressed in germ cells, being predominant in previtellogenic oocytes in the ovary and in spermatocytes in the testis.

It localises to the nucleus. In terms of biological role, probable orphan nuclear receptor. Binds to a response element containing repeats of the motif 5'-AGGTCA-3'. The chain is Nuclear receptor subfamily 6 group A member 1-A from Danio rerio (Zebrafish).